A 208-amino-acid polypeptide reads, in one-letter code: Imidazoleglycerol-phosphate dehydratase (208 aa).

The protein belongs to the imidazoleglycerol-phosphate dehydratase family.

It is found in the cytoplasm. It carries out the reaction D-erythro-1-(imidazol-4-yl)glycerol 3-phosphate = 3-(imidazol-4-yl)-2-oxopropyl phosphate + H2O. Its pathway is amino-acid biosynthesis; L-histidine biosynthesis; L-histidine from 5-phospho-alpha-D-ribose 1-diphosphate: step 6/9. The polypeptide is Imidazoleglycerol-phosphate dehydratase (Mycobacterium sp. (strain JLS)).